A 333-amino-acid chain; its full sequence is MTDAPELKAFDQRLRDEAAEEPTLEVPQGEPKKKTQVIAIYGKGGIGKSFTLANLSYMMAQIGKRVLLIGCDPKSDTTSLLFGGKACPTIIETSARKKLAGEEVQIGDVCFKRDGVFAMELGGPEVGRGCGGRGIIHGFELLEKLGFHDWDFDYVLLDFLGDVVCGGFGLPIARDMAQKVILVGSNDLQSLYVTNNVCSAVEYFRKLGGNVGVAGLVINKDDGTGEAKAFAEAADIPILATIPADEDLRRKSANYQIVGIPGTQWGPLFEGLAHAVGEAPPIRPKPLSQDGLLDLFTPEAIGADFKLEPATDADMRGKNAAAKKSLEVIYDDA.

The segment covering 1–17 has biased composition (basic and acidic residues); it reads MTDAPELKAFDQRLRDE. The interval 1 to 30 is disordered; that stretch reads MTDAPELKAFDQRLRDEAAEEPTLEVPQGE. ATP contacts are provided by residues 45–50 and K74; that span reads GIGKSF. S49 serves as a coordination point for Mg(2+). The [4Fe-4S] cluster site is built by C130 and C165. 219 to 220 is a binding site for ATP; the sequence is NK.

It belongs to the NifH/BchL/ChlL family. Homodimer. Chlorophyllide reductase is composed of three subunits; BchX, BchY and BchZ. Requires [4Fe-4S] cluster as cofactor.

It carries out the reaction 3-deacetyl-3-vinylbacteriochlorophyllide a + 2 oxidized [2Fe-2S]-[ferredoxin] + ADP + phosphate = chlorophyllide a + 2 reduced [2Fe-2S]-[ferredoxin] + ATP + H2O + H(+). The catalysed reaction is bacteriochlorophyllide a + 2 oxidized [2Fe-2S]-[ferredoxin] + ADP + phosphate = 3-acetyl-3-devinylchlorophyllide a + 2 reduced [2Fe-2S]-[ferredoxin] + ATP + H2O + H(+). The enzyme catalyses 3-deacetyl-3-(1-hydroxyethyl)bacteriochlorophyllide a + 2 oxidized [2Fe-2S]-[ferredoxin] + ADP + phosphate = 3-devinyl-3-(1-hydroxyethyl)chlorophyllide a + 2 reduced [2Fe-2S]-[ferredoxin] + ATP + H2O + H(+). The protein operates within porphyrin-containing compound metabolism; bacteriochlorophyll biosynthesis. Functionally, converts chlorophylls (Chl) into bacteriochlorophylls (BChl) by reducing ring B of the tetrapyrrole. The chain is Chlorophyllide reductase 35.5 kDa chain (bchX) from Cereibacter sphaeroides (strain ATCC 17023 / DSM 158 / JCM 6121 / CCUG 31486 / LMG 2827 / NBRC 12203 / NCIMB 8253 / ATH 2.4.1.) (Rhodobacter sphaeroides).